The sequence spans 528 residues: Glucosidase 2 subunit beta (528 aa).

A signal peptide spans 1–14 (MLLPLLLLLPMCWA). S24 bears the Phosphoserine; by FAM20C mark. LDL-receptor class A domains lie at 37–71 (FTCLDGSATIPFDQVNDDYCDCKDGSDEPGTAACP) and 72–113 (NGSF…VICE). 2 disulfides stabilise this stretch: C39–C58 and C56–C70. A substrate-binding site is contributed by D49. Q50, D53, Y55, D57, D63, and E64 together coordinate Ca(2+). D53 is a binding site for substrate. N72 carries an N-linked (GlcNAc...) asparagine glycan. 3 disulfides stabilise this stretch: C77–C99, C97–C112, and C100–C116. S89 bears the Phosphoserine; by PKC mark. Ca(2+) is bound by residues R91, D94, V96, D98, D104, and E105. K166 carries the N6-succinyllysine modification. S168 is subject to Phosphoserine; by FAM20C. EF-hand domains lie at 209–244 (QEQELAADAFKELDDDMDGTVSVTELQTHPELDTDG) and 245–290 (DGAL…TDLP). Ca(2+) is bound by residues D222, D224, D226, T228, and E233. Disordered regions lie at residues 234 to 266 (LQTHPELDTDGDGALSEAEAQALLSGDTQTDAT) and 281 to 357 (RSEA…DKMP). Low complexity predominate over residues 247–258 (ALSEAEAQALLS). A compositionally biased stretch (acidic residues) spans 312 to 337 (TEEEEEEEEEEEEEAEEEEEEEDSEE). A compositionally biased stretch (pro residues) spans 338–348 (APPPLSPPQPA). Phosphoserine; by PKC is present on residues S383 and S390. One can recognise an MRH domain in the interval 413-514 (SQCYELTTNE…ELMTPAACPE (102 aa)). C415 and C428 form a disulfide bridge. Position 434 is a phosphoserine; by PKC (S434). Cystine bridges form between C471–C500 and C485–C512. N-linked (GlcNAc...) asparagine glycosylation occurs at N476. The Prevents secretion from ER signature appears at 525–528 (HDEL).

As to quaternary structure, heterodimer of a catalytic alpha subunit (GANAB) and a beta subunit (PRKCSH). Binds glycosylated PTPRC.

The protein resides in the endoplasmic reticulum. It functions in the pathway glycan metabolism; N-glycan metabolism. Functionally, regulatory subunit of glucosidase II that cleaves sequentially the 2 innermost alpha-1,3-linked glucose residues from the Glc(2)Man(9)GlcNAc(2) oligosaccharide precursor of immature glycoproteins. Required for efficient PKD1/Polycystin-1 biogenesis and trafficking to the plasma membrane of the primary cilia. The polypeptide is Glucosidase 2 subunit beta (Homo sapiens (Human)).